A 474-amino-acid polypeptide reads, in one-letter code: MKHIVKNIHFVGIGGAGMSGIAEVLLNLGYKVSGSDVGNNAATRRLASLGATVMHGHDAANVSGANAVVVSTAVSGDNPEVLAARSQRIPVVPRAVMLAELMRLKQGVAIAGTHGKTTTTSLVASVLAEGGLDPTFVIGGRLNSAGANARLGTGDFIVAEADESDASFLNLFPVIEVITNIDADHMDTYGHDFARLKQAFIEFTQRLPFYGIAVLCVDDPNVREILPFVSKPVVRYGFAEDAQIRAVDARAVDGQMHFTVLRQLNGHTEPPLEIVLNLPGLHNVQNALAAIAIATELEVPDAAIVKALREFHGVGRRFQRYGEVATPDGAGTFTLVDDYGHHPVEMAATLAAARGAFPERRLVLAFQPHRFTRTRDCFEDFVKVLGTVDALLLSEVYAAGEAPIVAADGRALTRALRVAGKVEPVFVEQMEEMPQAILNAVRPGDVVVTMGAGSIGGVPGQLVSHQQALQGSQA.

ATP is bound at residue 112 to 118 (GTHGKTT).

It belongs to the MurCDEF family.

It is found in the cytoplasm. The enzyme catalyses UDP-N-acetyl-alpha-D-muramate + L-alanine + ATP = UDP-N-acetyl-alpha-D-muramoyl-L-alanine + ADP + phosphate + H(+). It participates in cell wall biogenesis; peptidoglycan biosynthesis. Its function is as follows. Cell wall formation. This chain is UDP-N-acetylmuramate--L-alanine ligase, found in Cupriavidus taiwanensis (strain DSM 17343 / BCRC 17206 / CCUG 44338 / CIP 107171 / LMG 19424 / R1) (Ralstonia taiwanensis (strain LMG 19424)).